The chain runs to 689 residues: Glycine--tRNA ligase beta subunit (689 aa).

It belongs to the class-II aminoacyl-tRNA synthetase family. Tetramer of two alpha and two beta subunits.

The protein resides in the cytoplasm. The catalysed reaction is tRNA(Gly) + glycine + ATP = glycyl-tRNA(Gly) + AMP + diphosphate. This chain is Glycine--tRNA ligase beta subunit, found in Escherichia coli O7:K1 (strain IAI39 / ExPEC).